The chain runs to 268 residues: Lipase (268 aa).

The first 34 residues, 1–34, serve as a signal peptide directing secretion; it reads MRLSRRAATASALLLTPALALFGASAAVSAPRIQ. The active-site Nucleophile is Ser44. Disulfide bonds link Cys61/Cys86, Cys127/Cys135, and Cys185/Cys232. His250 is an active-site residue.

Monomer.

The protein resides in the secreted. The catalysed reaction is a triacylglycerol + H2O = a diacylglycerol + a fatty acid + H(+). It carries out the reaction hexadecanoyl-CoA + H2O = hexadecanoate + CoA + H(+). With respect to regulation, inhibited by 3,4-dichloroisocoumarin and tetrahydrolipstatin in the absence of substrate, but by phenylmethylsulfonyl fluoride (PMSF) only in the presence of substrate. Several water-miscible solvents enhance the lipase hydrolytic activity in vitro. Tetrahydrofuran and N,N-dimethylformamide (both 50%) inactivate the enzyme with t1/2 of 5 minutes and t1/2 of 2 hours, respectively. Catalyzes the hydrolysis of p-nitrophenyl esters, alpha- and beta-naphthyl esters, and triacylglycerols, with a preference for medium acyl chain length (C8-C12). Shows a much higher hydrolysis rate of glycerol esters of unsaturated C16 and C18 fatty acids than that of their saturated counterparts, and a preference for cis double bond. Is also able to hydrolyze several natural oils and Tween detergents. Also displays thioesterase and phospholipase activities, towards palmitoyl-coenzyme A and diheptanoyl glycerophosphocholine, respectively. Shows transesterification activity of racemic 1-phenyl ethanol with vinyl acetate in hexane, proceeding with partial (R)-enantioselectivity. The polypeptide is Lipase (Streptomyces rimosus).